A 358-amino-acid polypeptide reads, in one-letter code: Neuronal-specific septin-3 (358 aa).

Over residues 1 to 10 (MSKGLPETRT) the composition is skewed to basic and acidic residues. Residues 1–30 (MSKGLPETRTDAAMSELVPEPRPKPAVPMK) are disordered. Residues 58 to 331 (TGFDFNIMVV…ETYRAKRLND (274 aa)) enclose the Septin-type G domain. A G1 motif region spans residues 68 to 75 (GQSGLGKS). A GTP-binding site is contributed by 68–75 (GQSGLGKS). Ser91 is subject to Phosphoserine. Thr102 serves as a coordination point for GTP. A G3 motif region spans residues 125 to 128 (DTPG). Residues 207–210 (AKAD) are G4 motif. Residues 208-216 (KADTMTLEE), Gly265, and Arg280 contribute to the GTP site.

This sequence belongs to the TRAFAC class TrmE-Era-EngA-EngB-Septin-like GTPase superfamily. Septin GTPase family. As to quaternary structure, septins polymerize into heterooligomeric protein complexes that form filaments, and can associate with cellular membranes, actin filaments and microtubules. GTPase activity is required for filament formation. In terms of processing, phosphorylated by PKG on serine residues. Phosphorylated by PKG on Ser-91. As to expression, brain-specific.

It is found in the cytoplasm. It localises to the cytoskeleton. The protein resides in the synapse. Its function is as follows. Filament-forming cytoskeletal GTPase. May play a role in cytokinesis (Potential). This chain is Neuronal-specific septin-3, found in Homo sapiens (Human).